The chain runs to 330 residues: PDZ and LIM domain protein 4 (330 aa).

The PDZ domain occupies 1–84 (MTHAVTLRGP…HLTLSVSRPE (84 aa)). Disordered stretches follow at residues 104 to 154 (DPEA…NEVT) and 219 to 239 (EAGEGGDRPGSGGSRNLKPAA). A phosphoserine mark is found at S111, S115, S118, S119, S124, and S134. Residues 111–122 (SPATSRRSSISG) are compositionally biased toward polar residues. In terms of domain architecture, LIM zinc-binding spans 255 to 305 (CTRCGHGIVGTIVKARDKLYHPECFMCSDCGLNLKQRGYFFLDERLYCENH).

Homodimer. Interacts (via C-terminus only or via combined C-terminus and LIM domain, but not LIM domain only) with PTPN13 (via the second or fourth PDZ domains). Found in a complex with PTPN13 and TRIP6. Interacts (via PDZ domain) with ACTN1 and ACTN2 (via C-terminal SDL residues). Interacts (via PDZ domain) with TRIP6 (via the second LIM domain or via the third LIM domain plus C-terminus). Interacts (via LIM domain) with GRIA1 (via C-terminus); this interaction as well as the interaction with alpha-actinin is required for their colocalization in early endosomes. Interacts with PDLIM1. Forms (via LIM domain) a heterodimer with PDLIM3. Interacts directly with SRC (via kinase domain and to a lesser extent the SH2 domain). In terms of processing, phosphorylated on tyrosine residue(s). Can be dephosphorylated by PTPN13. In terms of tissue distribution, detected in several tissues, most prominent in brain and heart of adults. Expressed in embryonic fibroblasts.

It localises to the cytoplasm. The protein resides in the cytoskeleton. The protein localises to the cell projection. Its subcellular location is the dendritic spine. It is found in the early endosome membrane. It localises to the recycling endosome membrane. The protein resides in the nucleus. The protein localises to the perinuclear region. Its subcellular location is the lamellipodium. It is found in the synapse. It localises to the synaptosome. In terms of biological role, suppresses SRC activation by recognizing and binding to active SRC and facilitating PTPN13-mediated dephosphorylation of SRC 'Tyr-419' leading to its inactivation. Inactivated SRC dissociates from this protein allowing the initiation of a new SRC inactivation cycle. Involved in reorganization of the actin cytoskeleton. In nonmuscle cells, binds to ACTN1 (alpha-actinin-1), increases the affinity of ACTN1 to F-actin (filamentous actin), and promotes formation of actin stress fibers. Involved in regulation of the synaptic AMPA receptor transport in dendritic spines of hippocampal pyramidal neurons directing the receptors toward an insertion at the postsynaptic membrane. Links endosomal surface-internalized GRIA1-containing AMPA receptors to the alpha-actinin/actin cytoskeleton. Increases AMPA receptor-mediated excitatory postsynaptic currents in neurons. The sequence is that of PDZ and LIM domain protein 4 (Pdlim4) from Rattus norvegicus (Rat).